Consider the following 317-residue polypeptide: Acetyl-coenzyme A carboxylase carboxyl transferase subunit alpha (317 aa).

The region spanning 40–293 (LEKRSADALK…GDIIAASLRS (254 aa)) is the CoA carboxyltransferase C-terminal domain.

Belongs to the AccA family. As to quaternary structure, acetyl-CoA carboxylase is a heterohexamer composed of biotin carboxyl carrier protein (AccB), biotin carboxylase (AccC) and two subunits each of ACCase subunit alpha (AccA) and ACCase subunit beta (AccD).

The protein localises to the cytoplasm. It catalyses the reaction N(6)-carboxybiotinyl-L-lysyl-[protein] + acetyl-CoA = N(6)-biotinyl-L-lysyl-[protein] + malonyl-CoA. It participates in lipid metabolism; malonyl-CoA biosynthesis; malonyl-CoA from acetyl-CoA: step 1/1. Functionally, component of the acetyl coenzyme A carboxylase (ACC) complex. First, biotin carboxylase catalyzes the carboxylation of biotin on its carrier protein (BCCP) and then the CO(2) group is transferred by the carboxyltransferase to acetyl-CoA to form malonyl-CoA. This chain is Acetyl-coenzyme A carboxylase carboxyl transferase subunit alpha, found in Brucella canis (strain ATCC 23365 / NCTC 10854 / RM-666).